The following is a 546-amino-acid chain: MAKYYIFITGGVVSSLGKGITAASLGSVLESRNLKVTLMKLDPYINVNPGTISPIQHGEVFVTEDGAETDLDLGHYERFIKTKMSKKNSFTSGKIYSEVLKNERKGFYLGSTIQVIPHITNEIKKCIINAGKGFDILLVEIGGTVGDIESLPFLESIRQMSIEIGKNKILYIHLTLVPYLKISKEVKTKPTQHSVKELLSIGIQPDILICRSEKNVSKYEKSKIALFCNVPKQAVFSLKNTNSIYKIPILIKKQGLDSYVCDRFCIKRPEADLSKWKEVIYKQKNPLGNVNIGIIGKYTELPDSYRSLISALEHAGLKNRLMINIQLINSKKIESLGISCLKNLHAILIPGGFGYRGVEGKIIAAKYSREKKIPYFGICLGMQVALIEFARNVTGLSEANSTEFINNCKHPVIAKISEWNKSINYLNKSNISSNNYSTMRLGNQKCHLTKGSLAFKIYNNSIILERHRHRYEVNNIFIEKIKFSGLSVSGWAYYDNHKLVEIIEYSNHPWFVGSQFHPEFNSTPRNSHPLFISFVKAAFDFKNKNI.

The tract at residues 1 to 266 (MAKYYIFITG…DSYVCDRFCI (266 aa)) is amidoligase domain. Ser-14 contacts CTP. Ser-14 contacts UTP. ATP contacts are provided by residues 15–20 (SLGKGI) and Asp-72. Residues Asp-72 and Glu-140 each contribute to the Mg(2+) site. CTP-binding positions include 147-149 (DIE), 187-192 (KTKPTQ), and Lys-223. UTP contacts are provided by residues 187 to 192 (KTKPTQ) and Lys-223. A Glutamine amidotransferase type-1 domain is found at 291–544 (NIGIIGKYTE…VKAAFDFKNK (254 aa)). Position 352 (Gly-352) interacts with L-glutamine. Residue Cys-379 is the Nucleophile; for glutamine hydrolysis of the active site. Residues 380 to 383 (LGMQ), Glu-403, and Arg-470 contribute to the L-glutamine site. Residues His-517 and Glu-519 contribute to the active site.

It belongs to the CTP synthase family. In terms of assembly, homotetramer.

The enzyme catalyses UTP + L-glutamine + ATP + H2O = CTP + L-glutamate + ADP + phosphate + 2 H(+). The catalysed reaction is L-glutamine + H2O = L-glutamate + NH4(+). It carries out the reaction UTP + NH4(+) + ATP = CTP + ADP + phosphate + 2 H(+). The protein operates within pyrimidine metabolism; CTP biosynthesis via de novo pathway; CTP from UDP: step 2/2. Its activity is regulated as follows. Allosterically activated by GTP, when glutamine is the substrate; GTP has no effect on the reaction when ammonia is the substrate. The allosteric effector GTP functions by stabilizing the protein conformation that binds the tetrahedral intermediate(s) formed during glutamine hydrolysis. Inhibited by the product CTP, via allosteric rather than competitive inhibition. In terms of biological role, catalyzes the ATP-dependent amination of UTP to CTP with either L-glutamine or ammonia as the source of nitrogen. Regulates intracellular CTP levels through interactions with the four ribonucleotide triphosphates. This chain is CTP synthase, found in Wigglesworthia glossinidia brevipalpis.